Here is a 283-residue protein sequence, read N- to C-terminus: Bifunctional protein FolD 2 (283 aa).

NADP(+)-binding positions include 165-167 (GRG), T192, and V233.

It belongs to the tetrahydrofolate dehydrogenase/cyclohydrolase family. Homodimer.

The catalysed reaction is (6R)-5,10-methylene-5,6,7,8-tetrahydrofolate + NADP(+) = (6R)-5,10-methenyltetrahydrofolate + NADPH. It carries out the reaction (6R)-5,10-methenyltetrahydrofolate + H2O = (6R)-10-formyltetrahydrofolate + H(+). Its pathway is one-carbon metabolism; tetrahydrofolate interconversion. Its function is as follows. Catalyzes the oxidation of 5,10-methylenetetrahydrofolate to 5,10-methenyltetrahydrofolate and then the hydrolysis of 5,10-methenyltetrahydrofolate to 10-formyltetrahydrofolate. This chain is Bifunctional protein FolD 2, found in Saccharopolyspora erythraea (strain ATCC 11635 / DSM 40517 / JCM 4748 / NBRC 13426 / NCIMB 8594 / NRRL 2338).